Reading from the N-terminus, the 991-residue chain is Pentatricopeptide repeat-containing protein At1g73710 (991 aa).

Disordered regions lie at residues 1 to 27 (MLQP…HHHH) and 61 to 81 (SSSS…RKRK). Positions 15 to 27 (VRHHHHHHHHHHH) are enriched in basic residues. A compositionally biased stretch (low complexity) spans 61-73 (SSSSVSPPRCSKP). 19 PPR repeats span residues 144–178 (NVIH…GVLP), 179–213 (TNNT…MHFP), 214–248 (DEVT…KVDL), 304–338 (LTST…GVPI), 339–373 (DTVT…GISP), 374–408 (DTKT…GLFP), 409–443 (DTVT…SIRI), 444–474 (DEHS…FQLD), 478–513 (SSTT…GQRN), 514–548 (DVLE…GTWP), 549–583 (DECT…GCKP), 584–618 (GCKT…GVKP), 619–653 (NEVV…GVQS), 654–688 (NHIV…EGGP), 689–719 (DVAA…LREK), 723–757 (DVIS…GLLS), 758–792 (DCTS…RKLL), 862–896 (EHFA…GLEP), and 897–931 (DIVT…ELEP). The segment covering 965-974 (AERECSSRSG) has biased composition (basic and acidic residues). Residues 965 to 991 (AERECSSRSGEEEEDDEEENSEEDEAF) are disordered. The span at 975 to 991 (EEEEDDEEENSEEDEAF) shows a compositional bias: acidic residues.

This sequence belongs to the PPR family. P subfamily.

In Arabidopsis thaliana (Mouse-ear cress), this protein is Pentatricopeptide repeat-containing protein At1g73710.